The sequence spans 106 residues: V-type proton ATPase subunit G2 (106 aa).

The residue at position 1 (methionine 1) is an N-acetylmethionine. Residues 31-67 (LKQAKEEAETEVAEHKTSTEQGFQRKLEATSGDSGAN) form a disordered region. Over residues 33 to 58 (QAKEEAETEVAEHKTSTEQGFQRKLE) the composition is skewed to basic and acidic residues.

This sequence belongs to the V-ATPase G subunit family. In terms of assembly, V-ATPase is a heteromultimeric enzyme composed of a peripheral catalytic V1 complex (components A to H) attached to an integral membrane V0 proton pore complex (components: a, c, c'', d and e).

The protein localises to the vacuole membrane. Its function is as follows. Catalytic subunit of the peripheral V1 complex of vacuolar ATPase (V-ATPase). V-ATPase is responsible for acidifying a variety of intracellular compartments in eukaryotic cells. The polypeptide is V-type proton ATPase subunit G2 (VHA-G2) (Arabidopsis thaliana (Mouse-ear cress)).